Reading from the N-terminus, the 264-residue chain is Acyl-[acyl-carrier-protein]--UDP-N-acetylglucosamine O-acyltransferase (264 aa).

Belongs to the transferase hexapeptide repeat family. LpxA subfamily. In terms of assembly, homotrimer.

It is found in the cytoplasm. The catalysed reaction is a (3R)-hydroxyacyl-[ACP] + UDP-N-acetyl-alpha-D-glucosamine = a UDP-3-O-[(3R)-3-hydroxyacyl]-N-acetyl-alpha-D-glucosamine + holo-[ACP]. It functions in the pathway glycolipid biosynthesis; lipid IV(A) biosynthesis; lipid IV(A) from (3R)-3-hydroxytetradecanoyl-[acyl-carrier-protein] and UDP-N-acetyl-alpha-D-glucosamine: step 1/6. Involved in the biosynthesis of lipid A, a phosphorylated glycolipid that anchors the lipopolysaccharide to the outer membrane of the cell. This chain is Acyl-[acyl-carrier-protein]--UDP-N-acetylglucosamine O-acyltransferase, found in Rickettsia peacockii (strain Rustic).